Consider the following 429-residue polypeptide: MKLTIFKSLYFQVLTAITLGVLLGHFYPDIGAQMKPLGDGFVKLIKMIIAPVIFCTVVTGIAGMESMKAVGRTGAIALLYFEIVSTIALLIGLLIVNLVQPGAGMNIDPGTLDAKAVAVYAEQAQQQGIVPFLLDIIPGSVIGAFASGNILQVLLFAVLFGFALHRLGDKGQLIFNVIESFSRVIFGIINMIMRLAPLGAFGAMAFTIGKYGVGSLLQLGQLIACFYLTCILFVVVVLGSIARANGFSIFKFVRYIKEELLIVLGTSSSESVLPRMLDKMEKLGCKKSVVGLVIPTGYSFNLDGTSIYLTMAAVFIAQATNTHMDVIHQVTLLVVLLLSSKGAAGVTGSGFIVLAATISAVGHLPLAGLALILGIDRFMSEARALTNLVGNGVATVVVAKWCKQLDEKQLHDTLSNKPGSGADKTLPSA.

8 consecutive transmembrane segments (helical) span residues 3–23 (LTIF…GVLL), 44–64 (LIKM…IAGM), 76–96 (IALL…LLIV), 142–162 (IGAF…LFGF), 184–204 (VIFG…FGAM), 222–242 (LIAC…GSIA), 326–346 (VIHQ…AAGV), and 352–372 (IVLA…LALI).

Belongs to the dicarboxylate/amino acid:cation symporter (DAACS) (TC 2.A.23) family.

It is found in the cell inner membrane. Functionally, responsible for the transport of dicarboxylates such as succinate, fumarate, and malate from the periplasm across the membrane. The chain is C4-dicarboxylate transport protein from Serratia proteamaculans (strain 568).